Here is a 453-residue protein sequence, read N- to C-terminus: MKVLRFNQDASCCVVNSGANELTVYNCDPFGKCFEFNISNVNGDSNDNGIGYDSLEAGSSSIESQVIAEMLFSTSLLAVVDKGQGINTGKKLKIVNIKKRSLICEIAFPSLIVDVVMNRKRICVLLDNDQIFIYDISCMKLMETLDLWESNNEGNLNDHIKVGERASNMINENLKNGNELDRIRSKSNNNNDQTNSDNGRSRTYSINGSHKIKPQLTLSGNDNSILCYSKYSSSKQNPARILNDIVVYDALNLKPINYLNSVHKGCVLKTSVSIDGKLLATASEKGTIIRIHKTGVDSDFASGPLLYKEFRRGSRPSHIHQLLFNKDSTLLVCVGDSDTIHIFRTDDDGLALDGIDGDIGSDSGGSLELIKNRIPHEQVKKFFSRKIKSHIPNQNLHRDFAHINMDRIVHTVVGFPEEFDNKIYVASDDGSFKTYTIPSKHGQCVLNKTSHFI.

One copy of the WD 1 repeat lies at 4–137 (LRFNQDASCC…NDQIFIYDIS (134 aa)). The interval 177 to 207 (GNELDRIRSKSNNNNDQTNSDNGRSRTYSIN) is disordered. The span at 187-198 (SNNNNDQTNSDN) shows a compositional bias: low complexity. WD repeat units lie at residues 252-347 (NLKP…RTDD) and 419-453 (FDNK…SHFI). Positions 310 to 314 (FRRGS) match the L/FRRG motif motif.

It belongs to the WD repeat PROPPIN family.

Its subcellular location is the cytoplasm. The protein localises to the membrane. It localises to the vacuole membrane. Its function is as follows. Required for cytoplasm to vacuole transport (Cvt) vesicles formation and mitophagy. Involved in binding of phosphatidylethanolamine to ATG8 and in recruitment of ATG8 and ATG5 to the pre-autophagosomal structure. Protects ATG8 from ARG4-mediated cleavage. The protein is Autophagy-related protein 21 (ATG21) of Candida glabrata (strain ATCC 2001 / BCRC 20586 / JCM 3761 / NBRC 0622 / NRRL Y-65 / CBS 138) (Yeast).